The primary structure comprises 449 residues: UDP-N-acetylmuramate--L-alanine ligase (449 aa).

Residue 121-127 (GAHGKSS) coordinates ATP.

Belongs to the MurCDEF family.

The protein localises to the cytoplasm. It catalyses the reaction UDP-N-acetyl-alpha-D-muramate + L-alanine + ATP = UDP-N-acetyl-alpha-D-muramoyl-L-alanine + ADP + phosphate + H(+). It participates in cell wall biogenesis; peptidoglycan biosynthesis. Functionally, cell wall formation. The polypeptide is UDP-N-acetylmuramate--L-alanine ligase (Helicobacter pylori (strain J99 / ATCC 700824) (Campylobacter pylori J99)).